Consider the following 237-residue polypeptide: Phosphatidylserine decarboxylase proenzyme (237 aa).

Ser206 functions as the Schiff-base intermediate with substrate; via pyruvic acid in the catalytic mechanism. Ser206 carries the post-translational modification Pyruvic acid (Ser); by autocatalysis.

It belongs to the phosphatidylserine decarboxylase family. PSD-A subfamily. As to quaternary structure, heterodimer of a large membrane-associated beta subunit and a small pyruvoyl-containing alpha subunit. Pyruvate is required as a cofactor. Post-translationally, is synthesized initially as an inactive proenzyme. Formation of the active enzyme involves a self-maturation process in which the active site pyruvoyl group is generated from an internal serine residue via an autocatalytic post-translational modification. Two non-identical subunits are generated from the proenzyme in this reaction, and the pyruvate is formed at the N-terminus of the alpha chain, which is derived from the carboxyl end of the proenzyme. The post-translation cleavage follows an unusual pathway, termed non-hydrolytic serinolysis, in which the side chain hydroxyl group of the serine supplies its oxygen atom to form the C-terminus of the beta chain, while the remainder of the serine residue undergoes an oxidative deamination to produce ammonia and the pyruvoyl prosthetic group on the alpha chain.

The protein localises to the cell membrane. The enzyme catalyses a 1,2-diacyl-sn-glycero-3-phospho-L-serine + H(+) = a 1,2-diacyl-sn-glycero-3-phosphoethanolamine + CO2. It functions in the pathway phospholipid metabolism; phosphatidylethanolamine biosynthesis; phosphatidylethanolamine from CDP-diacylglycerol: step 2/2. Functionally, catalyzes the formation of phosphatidylethanolamine (PtdEtn) from phosphatidylserine (PtdSer). This chain is Phosphatidylserine decarboxylase proenzyme, found in Nocardia farcinica (strain IFM 10152).